We begin with the raw amino-acid sequence, 285 residues long: tRNA pseudouridine synthase A (285 aa).

The active-site Nucleophile is the D64. Y125 is a substrate binding site.

Belongs to the tRNA pseudouridine synthase TruA family. Homodimer.

The catalysed reaction is uridine(38/39/40) in tRNA = pseudouridine(38/39/40) in tRNA. Functionally, formation of pseudouridine at positions 38, 39 and 40 in the anticodon stem and loop of transfer RNAs. The chain is tRNA pseudouridine synthase A from Streptomyces avermitilis (strain ATCC 31267 / DSM 46492 / JCM 5070 / NBRC 14893 / NCIMB 12804 / NRRL 8165 / MA-4680).